We begin with the raw amino-acid sequence, 490 residues long: Interferon-induced protein with tetratricopeptide repeats 3 (490 aa).

6 TPR repeats span residues 51–84 (ATMY…IQQE), 94–127 (LVTW…CKKF), 136–169 (SELD…KPNN), 172–206 (FSSG…SPDN), 207–240 (QYVK…APCQ), and 241–274 (TDVL…TPNN). Phosphoserine is present on Ser203. A disordered region spans residues 386 to 409 (LSISKKSTDKEEIKDQPQNVSENL). The span at 391–400 (KSTDKEEIKD) shows a compositional bias: basic and acidic residues. TPR repeat units follow at residues 415–448 (PNYW…LLRD) and 450–481 (PSGI…SPRE). Residues 467–490 (SEEMGQGAVSSSPRELLSNSEQLN) are disordered. Polar residues predominate over residues 474 to 490 (AVSSSPRELLSNSEQLN). Position 478 is a phosphoserine (Ser478).

This sequence belongs to the IFIT family. Component of an interferon-dependent multiprotein complex, at least composed of IFIT1, IFIT2 and IFIT3. Interacts with IFIT1 and IFIT2. Interacts (via N-terminus) with MAVS, TBK1, TRAF6 and RIGI. Interacts with COPS5.

Its subcellular location is the cytoplasm. The protein localises to the mitochondrion. IFN-induced antiviral protein which acts as an inhibitor of cellular as well as viral processes, cell migration, proliferation, signaling, and viral replication. Enhances MAVS-mediated host antiviral responses by serving as an adapter bridging TBK1 to MAVS which leads to the activation of TBK1 and phosphorylation of IRF3 and phosphorylated IRF3 translocates into nucleus to promote antiviral gene transcription. Exhibits an antiproliferative activity via the up-regulation of cell cycle negative regulators CDKN1A/p21 and CDKN1B/p27. Normally, CDKN1B/p27 turnover is regulated by COPS5, which binds CDKN1B/p27 in the nucleus and exports it to the cytoplasm for ubiquitin-dependent degradation. IFIT3 sequesters COPS5 in the cytoplasm, thereby increasing nuclear CDKN1B/p27 protein levels. Up-regulates CDKN1A/p21 by down-regulating MYC, a repressor of CDKN1A/p21. Can negatively regulate the apoptotic effects of IFIT2. This is Interferon-induced protein with tetratricopeptide repeats 3 (IFIT3) from Pan troglodytes (Chimpanzee).